Here is a 330-residue protein sequence, read N- to C-terminus: Phosphate acyltransferase (330 aa).

The protein belongs to the PlsX family. In terms of assembly, homodimer. Probably interacts with PlsY.

The protein resides in the cytoplasm. It carries out the reaction a fatty acyl-[ACP] + phosphate = an acyl phosphate + holo-[ACP]. It functions in the pathway lipid metabolism; phospholipid metabolism. Functionally, catalyzes the reversible formation of acyl-phosphate (acyl-PO(4)) from acyl-[acyl-carrier-protein] (acyl-ACP). This enzyme utilizes acyl-ACP as fatty acyl donor, but not acyl-CoA. The polypeptide is Phosphate acyltransferase (Bacillus anthracis (strain A0248)).